The following is a 69-amino-acid chain: U2-agatoxin-Ao1w (69 aa).

Residues 1 to 20 form the signal peptide; it reads MRAIISLLLISAMVFSMIEA. Positions 21 to 34 are excised as a propeptide; that stretch reads VPVEEGLQLFEGER. 3 disulfides stabilise this stretch: cysteine 37/cysteine 53, cysteine 44/cysteine 58, and cysteine 52/cysteine 68.

It belongs to the neurotoxin 01 (U2-agtx) family. Expressed by the venom gland.

It localises to the secreted. In terms of biological role, insect active toxin causing rapid but reversible paralysis in crickets. No activity shown in mammals. Does not show effect on mammalian voltage-gated calcium channels. In Agelena orientalis (Funnel-web spider), this protein is U2-agatoxin-Ao1w.